The following is a 66-amino-acid chain: Defensin-like peptide 2/4 (66 aa).

The N-terminal stretch at 1–22 is a signal peptide; the sequence is MRLAYLLLLLVAVLFQAGGGSA. A propeptide spanning residues 23–24 is cleaved from the precursor; sequence KP. The residue at position 26 (methionine 26) is a D-methionine; in form DLP-2. Intrachain disulfides connect cysteine 33–cysteine 63, cysteine 40–cysteine 56, and cysteine 48–cysteine 64.

Post-translationally, stereoinversion of L-Met-26 (in DLP-4) to D-Met-26 (in DLP-2). As to expression, produced by the crural gland and detected in venom from the spur located on each male hind leg. Is also widely expressed in both male and female tissues, including brain, intestine, kidney, lung, spleen and testis.

It is found in the secreted. Does not show antimicrobial, myotoxic, hemolytic and cell-promoting activities. The protein is Defensin-like peptide 2/4 of Ornithorhynchus anatinus (Duckbill platypus).